We begin with the raw amino-acid sequence, 725 residues long: Beta-adducin (725 aa).

Residues 1 to 22 (MSEDTVPEAASPPPSQGQHYFD) are disordered. S11 and S25 each carry phosphoserine. T55 carries the post-translational modification Phosphothreonine. A phosphoserine mark is found at S60 and S344. The segment at 425–444 (KQQKEKTRWLNTPNTYLRVN) is interaction with calmodulin. Residues 525-725 (AEKSRSPSTE…KSKKKEKVES (201 aa)) are disordered. A phosphoserine mark is found at S530 and S532. Residue T533 is modified to Phosphothreonine. S535 bears the Phosphoserine mark. T561 carries the phosphothreonine modification. A compositionally biased stretch (basic and acidic residues) spans 566-589 (EEYKKEVERKKLEQEQEGEKDIAT). S594, S598, S602, and S606 each carry phosphoserine. The span at 596–621 (VKSTPASPVQSPSKAGTKSPAVSPSK) shows a compositional bias: polar residues. T612 bears the Phosphothreonine mark. Phosphoserine is present on residues S614, S618, and S620. Positions 622 to 631 (TSEDTKKTEV) are enriched in basic and acidic residues. T674 carries the post-translational modification Phosphothreonine. A phosphoserine mark is found at S678, S685, S688, S692, S696, S698, S700, S702, and S712. A compositionally biased stretch (low complexity) spans 687 to 700 (TSGPLSPEGSPSKS). A compositionally biased stretch (basic residues) spans 701–725 (PSKKKKKFRTPSFLKKSKKKEKVES). The interval 703 to 720 (KKKKKFRTPSFLKKSKKK) is interaction with calmodulin.

This sequence belongs to the aldolase class II family. Adducin subfamily. As to quaternary structure, found in a complex with ADD2, DMTN and SLC2A1. Interacts with SLC2A1. Heterodimer of an alpha and a beta subunit.

The protein localises to the cytoplasm. It localises to the cytoskeleton. Its subcellular location is the cell membrane. In terms of biological role, membrane-cytoskeleton-associated protein that promotes the assembly of the spectrin-actin network. Binds to the erythrocyte membrane receptor SLC2A1/GLUT1 and may therefore provide a link between the spectrin cytoskeleton to the plasma membrane. Binds to calmodulin. Calmodulin binds preferentially to the beta subunit. This is Beta-adducin (Add2) from Mus musculus (Mouse).